A 273-amino-acid chain; its full sequence is Dermonecrotic toxin LhSicTox-alphaIA1iv (273 aa).

His-5 is a catalytic residue. Mg(2+) is bound by residues Glu-25 and Asp-27. The Nucleophile role is filled by His-41. Cystine bridges form between Cys-45–Cys-51 and Cys-47–Cys-190. Residue Asp-85 participates in Mg(2+) binding.

This sequence belongs to the arthropod phospholipase D family. Class II subfamily. Mg(2+) is required as a cofactor. Expressed by the venom gland.

The protein resides in the secreted. The enzyme catalyses an N-(acyl)-sphingosylphosphocholine = an N-(acyl)-sphingosyl-1,3-cyclic phosphate + choline. The catalysed reaction is an N-(acyl)-sphingosylphosphoethanolamine = an N-(acyl)-sphingosyl-1,3-cyclic phosphate + ethanolamine. It catalyses the reaction a 1-acyl-sn-glycero-3-phosphocholine = a 1-acyl-sn-glycero-2,3-cyclic phosphate + choline. It carries out the reaction a 1-acyl-sn-glycero-3-phosphoethanolamine = a 1-acyl-sn-glycero-2,3-cyclic phosphate + ethanolamine. Its function is as follows. Dermonecrotic toxins cleave the phosphodiester linkage between the phosphate and headgroup of certain phospholipids (sphingolipid and lysolipid substrates), forming an alcohol (often choline) and a cyclic phosphate. This toxin acts on sphingomyelin (SM). It may also act on ceramide phosphoethanolamine (CPE), lysophosphatidylcholine (LPC) and lysophosphatidylethanolamine (LPE), but not on lysophosphatidylserine (LPS), and lysophosphatidylglycerol (LPG). It acts by transphosphatidylation, releasing exclusively cyclic phosphate products as second products. Induces dermonecrosis, hemolysis, increased vascular permeability, edema, inflammatory response, and platelet aggregation. In Loxosceles hirsuta (Recluse spider), this protein is Dermonecrotic toxin LhSicTox-alphaIA1iv.